The sequence spans 213 residues: ATP phosphoribosyltransferase (213 aa).

Belongs to the ATP phosphoribosyltransferase family. Short subfamily. In terms of assembly, heteromultimer composed of HisG and HisZ subunits.

The protein resides in the cytoplasm. The catalysed reaction is 1-(5-phospho-beta-D-ribosyl)-ATP + diphosphate = 5-phospho-alpha-D-ribose 1-diphosphate + ATP. Its pathway is amino-acid biosynthesis; L-histidine biosynthesis; L-histidine from 5-phospho-alpha-D-ribose 1-diphosphate: step 1/9. Its function is as follows. Catalyzes the condensation of ATP and 5-phosphoribose 1-diphosphate to form N'-(5'-phosphoribosyl)-ATP (PR-ATP). Has a crucial role in the pathway because the rate of histidine biosynthesis seems to be controlled primarily by regulation of HisG enzymatic activity. The polypeptide is ATP phosphoribosyltransferase (Bacillus pumilus (strain SAFR-032)).